A 695-amino-acid polypeptide reads, in one-letter code: Highly divergent homeobox (695 aa).

2 consecutive DNA-binding regions (homeobox) follow at residues 3 to 63 (LRSV…SSKS) and 440 to 503 (ALQD…RLMG). Residues 56–81 (RRKMSSKSALESGGAPPGTAHTAPSV) are disordered. The tract at residues 653-695 (QQALLSDLPPELEEMDFNHTSPEPDDTSFSLSSLSEKNASDSL) is disordered. Over residues 679–695 (TSFSLSSLSEKNASDSL) the composition is skewed to polar residues.

Its subcellular location is the nucleus. This chain is Highly divergent homeobox (HDX), found in Gallus gallus (Chicken).